A 1153-amino-acid polypeptide reads, in one-letter code: Integrin alpha-M (1153 aa).

Residues 1 to 16 form the signal peptide; the sequence is MTLKALLVTALALCHG. At 17–1105 the chain is on the extracellular side; it reads FNLDTEHPMT…TKVEPYEVHN (1089 aa). 2 FG-GAP repeats span residues 18-75 and 76-135; these read NLDT…RCHP and IPLQ…RPPQ. N58 carries N-linked (GlcNAc...) asparagine glycosylation. Cysteines 66 and 73 form a disulfide. N-linked (GlcNAc...) asparagine glycosylation is present at N86. A disulfide bridge connects residues C105 and C123. The VWFA domain occupies 164-338; the sequence is IDFQKMKEFV…QEKIFAIEGT (175 aa). 5 FG-GAP repeats span residues 339 to 390, 391 to 442, 443 to 503, 506 to 564, and 569 to 629; these read QTGS…VTFI, NTTR…FGTW, EPHT…RARW, EALL…ASLS, and HRII…FSPK. Residue N391 is glycosylated (N-linked (GlcNAc...) asparagine). 12 residues coordinate Ca(2+): D465, D467, D469, N471, N473, D529, N531, D533, D537, D592, D596, and D600. C654 and C711 are disulfide-bonded. N696, N734, N772, N801, N881, N907, N941, N980, N994, and N1022 each carry an N-linked (GlcNAc...) asparagine glycan. The cysteines at positions 770 and 776 are disulfide-linked. 2 disulfide bridges follow: C999-C1023 and C1028-C1033. N1045, N1051, and N1076 each carry an N-linked (GlcNAc...) asparagine glycan. Residues 1106–1129 form a helical membrane-spanning segment; that stretch reads PVPLIVGSSIGGLVLLALITAGLY. Topologically, residues 1130–1153 are cytoplasmic; that stretch reads KLGFFKRQYKDMMNEAAPQDAPPQ. Residues 1132–1136 carry the GFFKR motif motif; that stretch reads GFFKR.

The protein belongs to the integrin alpha chain family. As to quaternary structure, heterodimer of an alpha and a beta subunit. ITGAM associates with ITGB2. Found in a complex with CD177 and ITGB2/CD18. Interacts with JAM3. Interacts with THBD. Interacts with complement factor H/CFH; this interaction mediates adhesion of neutrophils to pathogens leading to pathogen clearance. Interacts with TMEM268; this interaction inhibits ITGAM degradation via the endosome-lysosome pathway. As to expression, predominantly expressed in monocytes and granulocytes. Expressed in a subset of peritoneal mast cells. Expressed in microglia (at protein level).

The protein resides in the cell membrane. The protein localises to the membrane raft. Integrin ITGAM/ITGB2 is implicated in various adhesive interactions of monocytes, macrophages and granulocytes as well as in mediating the uptake of complement-coated particles and pathogens. It is identical with CR-3, the receptor for the iC3b fragment of the third complement component. It probably recognizes the R-G-D peptide in C3b. Integrin ITGAM/ITGB2 is also a receptor for fibrinogen, factor X and ICAM1. It recognizes P1 and P2 peptides of fibrinogen gamma chain. Regulates neutrophil migration. In association with beta subunit ITGB2/CD18, required for CD177-PRTN3-mediated activation of TNF primed neutrophils. May regulate phagocytosis-induced apoptosis in extravasated neutrophils. May play a role in mast cell development. Required with TYROBP/DAP12 in microglia to control production of microglial superoxide ions which promote the neuronal apoptosis that occurs during brain development. In Mus musculus (Mouse), this protein is Integrin alpha-M (Itgam).